We begin with the raw amino-acid sequence, 433 residues long: GTPase Der (433 aa).

EngA-type G domains follow at residues 3–167 (KIVS…DKNI) and 175–349 (PRIA…FNLR). GTP-binding positions include 9-16 (GRPNVGKS), 56-60 (DTGGY), 119-122 (NKID), 181-188 (GRPNVGKS), 228-232 (DTAGI), and 293-296 (NKWD). A KH-like domain is found at 350–433 (LRIKTSLLNK…IPIKILFRLK (84 aa)).

Belongs to the TRAFAC class TrmE-Era-EngA-EngB-Septin-like GTPase superfamily. EngA (Der) GTPase family. In terms of assembly, associates with the 50S ribosomal subunit.

Its function is as follows. GTPase that plays an essential role in the late steps of ribosome biogenesis. The protein is GTPase Der of Karelsulcia muelleri (strain GWSS) (Sulcia muelleri).